The sequence spans 323 residues: Aldo-keto reductase family 1 member C3 (323 aa).

Residues 23–24 (TY) and D50 each bind NADP(+). Catalysis depends on Y55, which acts as the Proton donor. H117 is a binding site for substrate. Residues 166–167 (SN), Q190, 216–222 (YSALGSQ), 270–272 (KSY), and 276–280 (RIRQN) each bind NADP(+).

It belongs to the aldo/keto reductase family. As to expression, expressed in many tissues including adrenal gland, brain, kidney, liver, lung, mammary gland, placenta, small intestine, colon, spleen, prostate and testis. High expression in prostate and mammary gland. In the prostate, higher levels in epithelial cells than in stromal cells. In the brain, expressed in medulla, spinal cord, frontotemporal lobes, thalamus, subthalamic nuclei and amygdala. Weaker expression in the hippocampus, substantia nigra and caudate.

The protein localises to the cytoplasm. The catalysed reaction is a 3alpha-hydroxysteroid + NADP(+) = a 3-oxosteroid + NADPH + H(+). It carries out the reaction a 3alpha-hydroxysteroid + NAD(+) = a 3-oxosteroid + NADH + H(+). It catalyses the reaction prostaglandin F2alpha + NADP(+) = prostaglandin D2 + NADPH + H(+). The enzyme catalyses prostaglandin F2alpha + NADP(+) = prostaglandin H2 + NADPH + H(+). The catalysed reaction is prostaglandin D2 + NADPH + H(+) = 11beta-prostaglandin F2 + NADP(+). It carries out the reaction prostaglandin D2-ethanolamide + NADPH + H(+) = 11beta-prostaglandin F2-ethanolamide + NADP(+). It catalyses the reaction testosterone + NAD(+) = androst-4-ene-3,17-dione + NADH + H(+). The enzyme catalyses testosterone + NADP(+) = androst-4-ene-3,17-dione + NADPH + H(+). The catalysed reaction is 17beta-estradiol + NADP(+) = estrone + NADPH + H(+). It carries out the reaction 17beta-estradiol + NAD(+) = estrone + NADH + H(+). It catalyses the reaction (20S)-hydroxypregn-4-en-3-one + NADP(+) = progesterone + NADPH + H(+). The enzyme catalyses (20S)-hydroxypregn-4-en-3-one + NAD(+) = progesterone + NADH + H(+). The catalysed reaction is 5alpha-androstane-3alpha,17beta-diol + NADP(+) = 17beta-hydroxy-5alpha-androstan-3-one + NADPH + H(+). It carries out the reaction 5alpha-androstane-3alpha,17beta-diol + NAD(+) = 17beta-hydroxy-5alpha-androstan-3-one + NADH + H(+). It catalyses the reaction androsterone + NADPH + H(+) = 5alpha-androstane-3alpha,17beta-diol + NADP(+). The enzyme catalyses 5alpha-androstane-3alpha,17beta-diol + NAD(+) = androsterone + NADH + H(+). The catalysed reaction is 5alpha-androstane-3beta,17beta-diol + NADP(+) = 17beta-hydroxy-5alpha-androstan-3-one + NADPH + H(+). It carries out the reaction 9-cis-retinol + NADP(+) = 9-cis-retinal + NADPH + H(+). It functions in the pathway steroid metabolism. With respect to regulation, strongly inhibited by nonsteroidal anti-inflammatory drugs (NSAID) including flufenamic acid and indomethacin. Also inhibited by the flavinoid, rutin, and by selective serotonin inhibitors (SSRIs). The oxidation reaction is inhibited by low micromolar concentrations of NADPH. Functionally, cytosolic aldo-keto reductase that catalyzes the NADH and NADPH-dependent reduction of ketosteroids to hydroxysteroids. Acts as a NAD(P)(H)-dependent 3-, 17- and 20-ketosteroid reductase on the steroid nucleus and side chain and regulates the metabolism of androgens, estrogens and progesterone. Displays the ability to catalyze both oxidation and reduction in vitro, but most probably acts as a reductase in vivo since the oxidase activity measured in vitro is inhibited by physiological concentration of NADPH. Acts preferentially as a 17-ketosteroid reductase and has the highest catalytic efficiency of the AKR1C enzyme for the reduction of delta4-androstenedione to form testosterone. Reduces prostaglandin (PG) D2 to 11beta-prostaglandin F2, progesterone to 20alpha-hydroxyprogesterone and estrone to 17beta-estradiol. Catalyzes the transformation of the potent androgen dihydrotestosterone (DHT) into the less active form, 5-alpha-androstan-3-alpha,17-beta-diol (3-alpha-diol). Also displays retinaldehyde reductase activity toward 9-cis-retinal. The chain is Aldo-keto reductase family 1 member C3 (AKR1C3) from Homo sapiens (Human).